We begin with the raw amino-acid sequence, 473 residues long: Trigger factor (473 aa).

Positions 171-256 (GDRVTIDFVG…VTKIQAAGEA (86 aa)) constitute a PPIase FKBP-type domain. A disordered region spans residues 439 to 473 (KEALFADEDGDDTTGGKPADKAEAKDESKTEAKAD). Positions 456–473 (PADKAEAKDESKTEAKAD) are enriched in basic and acidic residues.

It belongs to the FKBP-type PPIase family. Tig subfamily.

The protein resides in the cytoplasm. It carries out the reaction [protein]-peptidylproline (omega=180) = [protein]-peptidylproline (omega=0). Functionally, involved in protein export. Acts as a chaperone by maintaining the newly synthesized protein in an open conformation. Functions as a peptidyl-prolyl cis-trans isomerase. In Methylobacterium radiotolerans (strain ATCC 27329 / DSM 1819 / JCM 2831 / NBRC 15690 / NCIMB 10815 / 0-1), this protein is Trigger factor.